A 189-amino-acid chain; its full sequence is Flavin prenyltransferase UbiX (189 aa).

Residues 10–12 (GAS), S37, 88–91 (SIKT), and R123 contribute to the FMN site. Dimethylallyl phosphate contacts are provided by Y153 and R169.

The protein belongs to the UbiX/PAD1 family.

It carries out the reaction dimethylallyl phosphate + FMNH2 = prenylated FMNH2 + phosphate. Its pathway is cofactor biosynthesis; ubiquinone biosynthesis. Functionally, flavin prenyltransferase that catalyzes the synthesis of the prenylated FMN cofactor (prenyl-FMN) for 4-hydroxy-3-polyprenylbenzoic acid decarboxylase UbiD. The prenyltransferase is metal-independent and links a dimethylallyl moiety from dimethylallyl monophosphate (DMAP) to the flavin N5 and C6 atoms of FMN. The sequence is that of Flavin prenyltransferase UbiX from Escherichia coli O157:H7.